Here is a 116-residue protein sequence, read N- to C-terminus: Somatostatin (116 aa).

A signal peptide spans 1–24; that stretch reads MLSCRLQCALAALSIVLALGGVTC. Residues 25–88 constitute a propeptide that is removed on maturation; sequence APSDPRLRQF…QDEMRLELQR (64 aa). At Ala43 the chain carries Alanine amide. Residues 62–99 form a disordered region; sequence QTENDALEPEDLSQAAEQDEMRLELQRSANSNPAMAPR. Cys105 and Cys116 form a disulfide bridge.

This sequence belongs to the somatostatin family. In terms of processing, C-terminal amidation of the neuronostatin peptide is required for its biological activity, including for the regulation of mean arterial pressure.

The protein localises to the secreted. Its function is as follows. Inhibits the secretion of pituitary hormones, including that of growth hormone/somatotropin (GH1), PRL, ACTH, luteinizing hormone (LH) and TSH. Also impairs ghrelin- and GnRH-stimulated secretion of GH1 and LH; the inhibition of ghrelin-stimulated secretion of GH1 can be further increased by neuronostatin. Functionally, may enhance low-glucose-induced glucagon release by pancreatic alpha cells. This effect may be mediated by binding to GPR107 and PKA activation. May regulate cardiac contractile function. May compromise cardiomyocyte viability. In the central nervous system, may impair memory retention and may affect hippocampal excitability. May also have anxiolytic and anorexigenic effects. May play a role in arterial pressure regulation. May inhibit basal, but not ghrelin- or GnRH-stimulated secretion of GH1 or LH, but does not affect the release of other pituitary hormones, including PRL, ACTH, FSH or TSH. Potentiates inhibitory action of somatostatin on ghrelin-stimulated secretion of GH1, but not that on GnRH-stimulated secretion of LH. This is Somatostatin (SST) from Canis lupus familiaris (Dog).